A 187-amino-acid polypeptide reads, in one-letter code: Large ribosomal subunit protein uL22 (187 aa).

Composition is skewed to basic and acidic residues over residues 158 to 168 and 178 to 187; these read TKATDESEQAK and RQKEKMMRNE. Residues 158–187 are disordered; the sequence is TKATDESEQAKKKLSKKKLQRQKEKMMRNE.

It belongs to the universal ribosomal protein uL22 family.

This is Large ribosomal subunit protein uL22 (RpL17) from Anopheles gambiae (African malaria mosquito).